The primary structure comprises 522 residues: WEB family protein At2g38370 (522 aa).

Residues 1–32 (MAEFPEPGTVNPDSDLSNGRAEKPEIDTSAPF) form a disordered region. Coiled-coil stretches lie at residues 77 to 264 (ELQR…AARE) and 299 to 376 (ARSA…RSEN). Disordered stretches follow at residues 374–397 (SENGQRRRLSSSVNNTSKFKSRRE) and 458–493 (MSLGQMLAKNSSSDKTVSKRSEGKENEKRTKTRKRK). Basic and acidic residues predominate over residues 473–486 (TVSKRSEGKENEKR).

It belongs to the WEB family.

This Arabidopsis thaliana (Mouse-ear cress) protein is WEB family protein At2g38370.